The primary structure comprises 447 residues: F-box only protein 5 (447 aa).

2 positions are modified to phosphoserine: S94 and S102. Positions A135–V244 are interaction with EVI5. The region spanning L250–S296 is the F-box domain. Residues T261–K339 form a sufficient for interaction with RPS6KA2; Prevents association of CDC20 with RPS6KA2 region. A requires for efficient binding to CDC20 region spans residues T261–C409. The segment at N305–L447 is inhibits APC ubiquitin ligase activity. Residues R322–L325 are competitively blocks access of APC substrates to the D-box coreceptor formed by FZR1 and ANAPC10. Residues L337–R358 form a disordered region. The span at T343 to S357 shows a compositional bias: polar residues. A ZBR-type zinc finger spans residues S374–G422. Zn(2+) contacts are provided by C378, C381, C396, C401, C406, C409, H414, and C419. The allows a rapid multiple mono-ubiquitination of the APC substrate, but strongly inhibits the slow ubiquitin chain elongation catalyzed by UBCH10 stretch occupies residues C378 to S420. The sufficient to suppress UBE2S activity; essential for interaction with UBE2S; competitively inhibits the rapide ubiquitin chain elongation by UBE2D1 which blocks UBE2D1 with APC; indispensable for recruitment and position of FBXO5 to the catalytic site of APC; abrogates the inhibition of ubiquitin chain assembly primarily catalyzed by UBE2S; inhibits the ubiquitination by either UBE2C or UBE2D1 stretch occupies residues T437–L447.

In terms of assembly, part of a SCF (SKP1-cullin-F-box) protein ligase complex. Interacts with BTRC; mediates proteolysis by the SCF ubiquitin ligase complex leading to activation of APC in late mitosis and subsequent mitotic progression. Interacts with FZR1/CDH1 and the N-terminal substrate-binding domain of CDC20; prevents APC activation. Also interacts with EVI5 which blocks its phosphorylation by PLK1 and prevents its subsequent binding to BTRC and degradation. Interacts simultaneously with anaphase promoting complex (APC), through at least ANAPC2, CDC23, CDC27, the APC substrate GMNN and the APC activator FZR1. Interacts with UBE2S; interferes with the activity of UBE2S mainly by disrupting the dynamic electrostatic association between the C-terminal tail of UBE2S and ANAPC2. Interacts with RPS6KA2; cooperates to induce the metaphase arrest of early blastomeres; increases and stabilizes interaction of FBXO5 with CDC20. Phosphorylation by CDK2 and subsequently by PLK1 triggers degradation during early mitosis through ubiquitin-mediated proteolysis by the SCF ubiquitin ligase complex containing the F-box protein BTRC. This degradation is necessary for the activation of APC in late mitosis and subsequent mitotic progression. Phosphorylated by RPS6KA2; increases and stabilizes interaction with CDC20. In terms of processing, ubiquitinated by the SCF(BTRC) complex following phosphorylation by PLK1. Undergoes both 'Lys-11' and 'Lys-48'-linked polyubiquitination by APC-FZR1 complex leading to degradation by proteasome during G1 phase. Degraded through the SCF(BTRC) complex; degradation occurs during oocyte maturation, between germinal vesicle breakdown (GVBD) and meiosis I, and is required for the meiosis I-meiosis II transition.

It is found in the nucleus. Its subcellular location is the cytoplasm. The protein localises to the cytoskeleton. The protein resides in the spindle. The protein operates within protein modification; protein ubiquitination. Its function is as follows. Regulator of APC activity during mitotic and meiotic cell cycle. During mitotic cell cycle plays a role as both substrate and inhibitor of APC-FZR1 complex. During G1 phase, plays a role as substrate of APC-FZR1 complex E3 ligase. Then switches as an inhibitor of APC-FZR1 complex during S and G2 leading to cell-cycle commitment. As APC inhibitor, prevents the degradation of APC substrates at multiple levels: by interacting with APC and blocking access of APC substrates to the D-box coreceptor, formed by FZR1 and ANAPC10; by suppressing ubiquitin ligation and chain elongation by APC by preventing the UBE2C and UBE2S activities. Plays a role in genome integrity preservation by coordinating DNA replication with mitosis through APC inhibition in interphase to stabilize CCNA2 and GMNN in order to promote mitosis and prevent rereplication and DNA damage-induced cellular senescence. During oocyte maturation, plays a role in meiosis through inactivation of APC-FZR1 complex. Inhibits APC through RPS6KA2 interaction that increases FBXO5 affiniy for CDC20 leading to the metaphase arrest of the second meiotic division before fertilization. Controls entry into the first meiotic division through inactivation of APC-FZR1 complex. Promotes migration and osteogenic differentiation of mesenchymal stem cells. The sequence is that of F-box only protein 5 from Homo sapiens (Human).